Consider the following 238-residue polypeptide: Tetrahydromethanopterin S-methyltransferase subunit A 1 (238 aa).

Over 2-218 (VEKKSPAEGW…RMFAGMYSGK (217 aa)) the chain is Cytoplasmic. 5-hydroxybenzimidazolylcob(I)amide is bound at residue His-84. The helical transmembrane segment at 219-237 (VQGIMIGLAFTLTLGILLL) threads the bilayer. Residue Val-238 is a topological domain, extracellular.

It belongs to the MtrA family. The complex is composed of 8 subunits; MtrA, MtrB, MtrC, MtrD, MtrE, MtrF, MtrG and MtrH. The cofactor is 5-hydroxybenzimidazolylcob(I)amide.

It is found in the cell membrane. The enzyme catalyses 5-methyl-5,6,7,8-tetrahydromethanopterin + coenzyme M + 2 Na(+)(in) = 5,6,7,8-tetrahydromethanopterin + methyl-coenzyme M + 2 Na(+)(out). It participates in one-carbon metabolism; methanogenesis from CO(2); methyl-coenzyme M from 5,10-methylene-5,6,7,8-tetrahydromethanopterin: step 2/2. Functionally, part of a complex that catalyzes the formation of methyl-coenzyme M and tetrahydromethanopterin from coenzyme M and methyl-tetrahydromethanopterin. This is an energy-conserving, sodium-ion translocating step. This Methanothermobacter thermautotrophicus (strain ATCC 29096 / DSM 1053 / JCM 10044 / NBRC 100330 / Delta H) (Methanobacterium thermoautotrophicum) protein is Tetrahydromethanopterin S-methyltransferase subunit A 1.